Consider the following 540-residue polypeptide: Solute carrier family 22 member 7 (540 aa).

12 helical membrane-spanning segments follow: residues 21 to 41 (LVLLALPRFLLPMHFLLPIFM), 144 to 164 (VTSTCFFIGVLLGAVVYGYLS), 172 to 192 (LLLVAYVSTLALGLMSAASVN), 202 to 222 (LTGSALAGFTIIVLPLELEWL), 232 to 252 (VISTTFWTGGVLLLTLVGYLI), 257 to 277 (WLLLAATLPCVPGIISIWWVP), 344 to 364 (VSLCCMMMWFGVNFSYYGLTL), 378 to 398 (LLFGAVEVPSKITVFFLVRLV), 402 to 422 (LTEAGMLLATALTFGISLLVS), 429 to 449 (ITALVVIGKAFSEAAFTTAYL), 462 to 484 (TGMGFTALIGRLGASLAPLVVLL), and 488 to 510 (WLLLPKLAYGGISFLAACTVLLL).

It belongs to the major facilitator (TC 2.A.1) superfamily. Organic cation transporter (TC 2.A.1.19) family. Abundant expression in male and female kidney. In kidney, expressed at the brush border of the proximal tubule S3 segment (S3) in the outer stripe and medullary rays. In kidney, expression is higher in female than male. Also expressed in female liver.

Its subcellular location is the basolateral cell membrane. It is found in the apical cell membrane. The protein resides in the cell membrane. It catalyses the reaction orotate(out) + L-glutamate(in) = orotate(in) + L-glutamate(out). The enzyme catalyses 3',5'-cyclic GMP(in) = 3',5'-cyclic GMP(out). It carries out the reaction GMP(in) = GMP(out). The catalysed reaction is 2'-deoxyguanosine(in) = 2'-deoxyguanosine(out). It catalyses the reaction GDP(in) = GDP(out). The enzyme catalyses guanosine(in) = guanosine(out). It carries out the reaction GTP(in) = GTP(out). The catalysed reaction is 3',5'-cyclic AMP(in) = 3',5'-cyclic AMP(out). It catalyses the reaction creatinine(in) = creatinine(out). The enzyme catalyses prostaglandin E2(out) = prostaglandin E2(in). It carries out the reaction 2-oxoglutarate(in) = 2-oxoglutarate(out). The catalysed reaction is glutarate(in) = glutarate(out). It catalyses the reaction urate(out) = urate(in). The enzyme catalyses estrone 3-sulfate(out) = estrone 3-sulfate(in). Functions as a Na(+)-independent bidirectional multispecific transporter. Contributes to the renal and hepatic elimination of endogenous organic compounds from the systemic circulation into the urine and bile, respectively. Capable of transporting a wide range of purine and pyrimidine nucleobases, nucleosides, and nucleotides with cGMP, 2'deoxyguanosine and GMP being the preferred substrates. Functions as a pH- and chloride-independent cGMP bidirectional facilitative transporter that can regulate both intracellular and extracellular levels of cGMP and may be involved in cGMP signaling pathways. Mediates orotate/glutamate bidirectional exchange and most likely display a physiological role in hepatic release of glutamate into the blood. Involved in renal secretion and possible reabsorption of creatinine. Able to uptake prostaglandin E2 (PGE2) and may contribute to PGE2 renal excretion. Also transports alpha-ketoglutarate and urate. Unlike human hortolog, able to transport glutarate. Apart from the orotate/glutamate exchange, the counterions for the uptake of other SLC22A7/OAT2 substrates remain to be identified. The polypeptide is Solute carrier family 22 member 7 (Mus musculus (Mouse)).